Here is a 79-residue protein sequence, read N- to C-terminus: Keratin-associated protein 21-1 (79 aa).

Interacts with hair keratins.

Its function is as follows. In the hair cortex, hair keratin intermediate filaments are embedded in an interfilamentous matrix, consisting of hair keratin-associated proteins (KRTAP), which are essential for the formation of a rigid and resistant hair shaft through their extensive disulfide bond cross-linking with abundant cysteine residues of hair keratins. The matrix proteins include the high-sulfur and high-glycine-tyrosine keratins. This Homo sapiens (Human) protein is Keratin-associated protein 21-1 (KRTAP21-1).